Reading from the N-terminus, the 482-residue chain is Ras GTPase-activating protein-binding protein 2 (482 aa).

The NTF2 domain occupies 11 to 133 (VGREFVRQYY…FYVHNDMFRY (123 aa)). The span at 140-158 (DSEPELDEESEDEVEEEQE) shows a compositional bias: acidic residues. 2 disordered regions span residues 140-171 (DSEP…QENA) and 187-318 (EPLE…EQND). 3 positions are modified to phosphoserine: S141, S149, and S225. The interval 142–220 (EPELDEESED…PQVEEKNLEE (79 aa)) is acidic disordered region. Residues 191-225 (ESSHEPEPEPESETKTEELKPQVEEKNLEELEEKS) are compositionally biased toward basic and acidic residues. T227 is subject to Phosphothreonine. S235 is modified (phosphoserine). A compositionally biased stretch (polar residues) spans 247-264 (ASVTSKNLPPSGTVSSSG). Residue K281 forms a Glycyl lysine isopeptide (Lys-Gly) (interchain with G-Cter in SUMO2) linkage. Residues 290–300 (RVREQRPRERP) show a composition bias toward basic and acidic residues. The RRM domain occupies 331 to 409 (HQLFVGNLPH…VRLNVEEKKT (79 aa)). K392 is subject to N6-succinyllysine. An RG-rich region region spans residues 404 to 476 (VEEKKTRAAR…GRGTGQMEGR (73 aa)). Basic and acidic residues predominate over residues 408 to 432 (KTRAARERETRGGGDDRRDIRRNDR). Residues 408 to 482 (KTRAARERET…MEGRFTGQRR (75 aa)) form a disordered region. Over residues 433–445 (GPGGPRGIVGGGM) the composition is skewed to gly residues. The residue at position 457 (R457) is an Omega-N-methylarginine. Phosphoserine is present on S466. R468 carries the post-translational modification Omega-N-methylarginine.

In terms of assembly, forms homooligomers. Forms heterodimers with G3BP1. Interacts with NFKBIA (via N-terminus). Interacts (via NTF2 domain) with USP10; inhibiting stress granule formation. Interacts (via NTF2 domain) with CAPRIN1; promoting stress granule formation. Associates (via RG-rich region) with 40S ribosome subunits. Interacts with PABPC1. (Microbial infection) Interacts with non-structural protein 3 (via C-terminus) of Sindbis virus and Semliki forest virus; this interaction inhibits the formation of host stress granules on viral mRNAs and the nsp3-G3BP2 complexes bind viral RNAs and probably orchestrate the assembly of viral replication complexes. (Microbial infection) Cleaved by foot-and-mouth disease virus leader protease; this cleavage suppresses the formation of cytoplasmic stress granules.

Its subcellular location is the cytoplasm. It is found in the stress granule. Its activity is regulated as follows. Under physiological conditions, G3BP2 adopts a compact state that is stabilized by intramolecular interactions between the RG-rich and the acidic regions that inhibit phase separation. Upon stress, polysomes disassemble and mRNAs are released in an unfolded protein-free state. Binding of unfolded mRNA to G3BP2 outcompetes the intramolecular interactions and RNA-bound G3BP2 adopts an expanded conformation in which the RG-rich region becomes exposed to engage in protein-protein and protein-RNA interactions, allowing physical cross-linking of RNA molecules to form protein-RNA condensates, leading to liquid-liquid phase separation (LLPS). In terms of biological role, scaffold protein that plays an essential role in cytoplasmic stress granule formation which acts as a platform for antiviral signaling. Plays an essential role in stress granule formation. Stress granules are membraneless compartments that store mRNAs and proteins, such as stalled translation pre-initiation complexes, in response to stress. Promotes formation of stress granules phase-separated membraneless compartment by undergoing liquid-liquid phase separation (LLPS) upon unfolded RNA-binding: functions as a molecular switch that triggers RNA-dependent LLPS in response to a rise in intracellular free RNA concentrations. This is Ras GTPase-activating protein-binding protein 2 from Homo sapiens (Human).